Here is an 82-residue protein sequence, read N- to C-terminus: MPFPKIAEVRELSDEEIANEIAKVKRELFDLRILKATGRIEKTHLFKHNRHRLAQLLTIEKERELAKNAEASTTVSTVENTQ.

Belongs to the universal ribosomal protein uL29 family.

The chain is Large ribosomal subunit protein uL29 from Trichodesmium erythraeum (strain IMS101).